A 309-amino-acid chain; its full sequence is Anamorsin (309 aa).

The segment at I6–S172 is N-terminal SAM-like domain. Residues Q173–L222 are linker. Phosphoserine is present on residues S182, S183, and S213. Residues C235, C244, C247, and C249 each contribute to the [2Fe-2S] cluster site. The interval C235–C249 is fe-S binding site A. S269 is modified (phosphoserine). The [4Fe-4S] cluster site is built by C271, C274, C282, and C285. 2 consecutive short sequence motifs (cx2C motif) follow at residues C271–C274 and C282–C285. The fe-S binding site B stretch occupies residues C271–C285. Phosphoserine occurs at positions 302 and 304.

Belongs to the anamorsin family. Monomer. Interacts with NDOR1. Interacts with CHCHD4. [2Fe-2S] cluster serves as cofactor. It depends on [4Fe-4S] cluster as a cofactor.

The protein resides in the cytoplasm. It localises to the nucleus. The protein localises to the mitochondrion intermembrane space. Its function is as follows. Component of the cytosolic iron-sulfur (Fe-S) protein assembly (CIA) machinery required for the maturation of extramitochondrial Fe-S proteins. Part of an electron transfer chain functioning in an early step of cytosolic Fe-S biogenesis, facilitating the de novo assembly of a [4Fe-4S] cluster on the scaffold complex NUBP1-NUBP2. Electrons are transferred to CIAPIN1 from NADPH via the FAD- and FMN-containing protein NDOR1. NDOR1-CIAPIN1 are also required for the assembly of the diferric tyrosyl radical cofactor of ribonucleotide reductase (RNR), probably by providing electrons for reduction during radical cofactor maturation in the catalytic small subunit. Has anti-apoptotic effects in the cell. Involved in negative control of cell death upon cytokine withdrawal. Promotes development of hematopoietic cells. This is Anamorsin from Mus musculus (Mouse).